Reading from the N-terminus, the 190-residue chain is Adenine phosphoribosyltransferase (190 aa).

The protein belongs to the purine/pyrimidine phosphoribosyltransferase family. As to quaternary structure, homodimer.

It localises to the cytoplasm. It carries out the reaction AMP + diphosphate = 5-phospho-alpha-D-ribose 1-diphosphate + adenine. It participates in purine metabolism; AMP biosynthesis via salvage pathway; AMP from adenine: step 1/1. Functionally, catalyzes a salvage reaction resulting in the formation of AMP, that is energically less costly than de novo synthesis. The polypeptide is Adenine phosphoribosyltransferase (Cupriavidus metallidurans (strain ATCC 43123 / DSM 2839 / NBRC 102507 / CH34) (Ralstonia metallidurans)).